Here is a 361-residue protein sequence, read N- to C-terminus: NudC domain-containing protein 3 (361 aa).

The segment covering 87–97 has biased composition (basic and acidic residues); that stretch reads KIRRKEEEEAK. Disordered regions lie at residues 87 to 106 and 124 to 158; these read KIRR…AAEK and LDGH…VAGA. The residue at position 146 (S146) is a Phosphoserine. Low complexity predominate over residues 148-158; it reads EAEAPGAVAGA. A CS domain is found at 185–277; it reads AVRENYTWSQ…VGEYWWNAIL (93 aa). 2 positions are modified to phosphoserine: S340 and S355.

The protein is NudC domain-containing protein 3 (NUDCD3) of Homo sapiens (Human).